The sequence spans 550 residues: Carnitine transporter (550 aa).

Helical transmembrane passes span 15–35 (FLAV…AIYS), 53–73 (FTTP…GLAF), 92–112 (SWIF…WGFL), 137–157 (VAYS…LASI), 196–216 (MFLL…AVTF), 230–250 (FMTK…SSYV), 263–283 (VCLG…TQFI), 317–337 (WTVF…LFVT), 347–367 (EVIF…FGVF), 401–421 (LLPA…VFLA), 451–471 (LFWC…KAPL), and 477–497 (ATIV…YGLV).

Belongs to the BCCT transporter (TC 2.A.15) family.

It is found in the cell inner membrane. Its activity is regulated as follows. Inhibited by the protonophore 3,3',4',5-tetrachlorosalicylanilide (TCS). Not activated by osmolarity. Functionally, catalyzes the energy-dependent uptake of carnitine and is essential for growth on carnitine. Can also mediate the uptake of choline. Is probably a proton:substrate symporter. This chain is Carnitine transporter, found in Acinetobacter baumannii (strain ATCC 19606 / DSM 30007 / JCM 6841 / CCUG 19606 / CIP 70.34 / NBRC 109757 / NCIMB 12457 / NCTC 12156 / 81).